The following is a 149-amino-acid chain: Small ribosomal subunit protein uS9 (149 aa).

It belongs to the universal ribosomal protein uS9 family.

The protein resides in the cytoplasm. In Oryza sativa subsp. indica (Rice), this protein is Small ribosomal subunit protein uS9 (RPS16A).